Here is a 484-residue protein sequence, read N- to C-terminus: Glycogen synthase (484 aa).

Position 15 (Lys15) interacts with ADP-alpha-D-glucose.

The protein belongs to the glycosyltransferase 1 family. Bacterial/plant glycogen synthase subfamily.

The catalysed reaction is [(1-&gt;4)-alpha-D-glucosyl](n) + ADP-alpha-D-glucose = [(1-&gt;4)-alpha-D-glucosyl](n+1) + ADP + H(+). The protein operates within glycan biosynthesis; glycogen biosynthesis. Functionally, synthesizes alpha-1,4-glucan chains using ADP-glucose. The sequence is that of Glycogen synthase from Koribacter versatilis (strain Ellin345).